A 67-amino-acid chain; its full sequence is Ubiquitin-like protein 5 (67 aa).

Positions 2–67 (IEVVCNDRLG…DGDGLELYYN (66 aa)) constitute a Ubiquitin-like domain.

The protein resides in the cytoplasm. In Dictyostelium discoideum (Social amoeba), this protein is Ubiquitin-like protein 5 (ubl5).